The sequence spans 407 residues: O-antigen polymerase (407 aa).

11 helical membrane passes run 2 to 22 (LIISYIALCLLFIVYLYTLSV), 31 to 51 (VMVPYLIITVPTLYVFEGIFV), 63 to 83 (YLFFYTCYITYIASFVISYLY), 101 to 121 (YVFTSLLFTFLAFIIYLPVLM), 141 to 161 (YGIYFYPSLMFSLVASICAFF), 168 to 185 (LFCISIVLFNCILIFLHG), 190 to 204 (IFSIFIAFILYLSYI), 211 to 231 (FMFLVKSFAVIAVIVTAFFAY), 319 to 339 (ADFGLFTPVWLVISGVFKGVL), 356 to 376 (FIMFLFCIGISVIPVSMGWLF), and 382 to 402 (IAFMVYIASSFVFSEHIRFVL).

It is found in the cell inner membrane. The enzyme catalyses n lipid-linked O-antigen repeat units = a lipid-linked O antigen + (n-1) polyisoprenyl diphosphate.. Its pathway is bacterial outer membrane biogenesis; LPS O-antigen biosynthesis. Functionally, polymerase involved in the biosynthesis of the lipopolysaccharide (LPS). Catalyzes the polymerization of the O-antigen repeat units on the periplasmic face of the inner membrane, leading to the formation of the lipid-linked O-antigen molecule. The sequence is that of O-antigen polymerase (rfc) from Salmonella typhi.